A 252-amino-acid chain; its full sequence is MVEDSRVRDALKGGDQKALPASLVPQAPPVLTSKDKITKRMIVVLAMASLETHKISSNGPGGDKYVLLNCDDHQGLLKKMGRDISEARPDITHQCLLTLLDSPINKAGKLQVYIQTSRGILIEVNPTVRIPRTFKRFSGLMVQLLHKLSIRSVNSEEKLLKVIKNPITDHLPTKCRKVTLSFDAPVIRVQDYIEKLDDDESICVFVGAMARGKDNFADEYVDEKVGLSNYPLSASVACSKFCHGAEDAWNIL.

Residues leucine 180, glycine 207, 212–214 (GKD), and 227–232 (LSNYPL) contribute to the S-adenosyl-L-methionine site.

The protein belongs to the class IV-like SAM-binding methyltransferase superfamily. RNA methyltransferase NEP1 family. In terms of assembly, homodimer. Interacts with snoRNA U3. Interacts with NOP14 and MPP10. Component of the ribosomal small subunit (SSU) processome composed of at least 40 protein subunits and snoRNA U3.

The protein resides in the nucleus. The protein localises to the nucleolus. It carries out the reaction pseudouridine(1191) in yeast 18S rRNA + S-adenosyl-L-methionine = N(1)-methylpseudouridine(1191) in yeast 18S rRNA + S-adenosyl-L-homocysteine + H(+). S-adenosyl-L-methionine-dependent pseudouridine N(1)-methyltransferase that methylates pseudouridine at position 1189 (Psi1189) in 18S rRNA. Involved the biosynthesis of the hypermodified N1-methyl-N3-(3-amino-3-carboxypropyl) pseudouridine (m1acp3-Psi) conserved in eukaryotic 18S rRNA. N1-methylation is independent on acp-modification at the N3-position of U1191. Also has an essential role in 40S ribosomal subunit biogenesis independent on its methyltransferase activity, facilitating the incorporation of ribosomal protein S19 (RPS19A/RPS19B) during the formation of pre-ribosomes. This is Ribosomal RNA small subunit methyltransferase NEP1 from Saccharomyces cerevisiae (strain ATCC 204508 / S288c) (Baker's yeast).